Reading from the N-terminus, the 478-residue chain is MTRIKINARRIFSLLIPFFFFTSVHAEQTAAPAKPVTVEAKNETFAPQHHDQYLSWKATSEQSERVDALAEDPRLVILWAGYPFSRDYNKPRGHAFAVTDVRETLRTGAPKNAEDGPLPMACWSCKSPDVARLIQKDGEDGYFHGKWARGGPEIVNNLGCADCHNTASPEFAKGKPELTLSRPYAARAMEAIGKPFEKAGRFDQQSMVCGQCHVEYYFDGKNKAVKFPWDDGMKVENMEQYYDKIAFSDWTNSLSKTPMLKAQHPEYETWTAGIHGKNNVTCIDCHMPKVQNAEGKLYTDHKIGNPFDNFAQTCANCHTQDKAALQKVVAERKQSINDLKIKVEDQLVHAHFEAKAALDAGATEAEMKPIQDDIRHAQWRWDLAIASHGIHMHAPEEGLRMLGTAMDKAADARTKLARLLATKGITHEIQIPDISTKEKAQQAIGLNMEQIKAEKQDFIKTVIPQWEEQARKNGLLSQ.

The N-terminal stretch at 1–26 (MTRIKINARRIFSLLIPFFFFTSVHA) is a signal peptide. A heme c-binding site is contributed by histidine 94. Residues cysteine 122, cysteine 125, and lysine 126 each contribute to the heme site. 6 residues coordinate heme c: cysteine 160, cysteine 163, histidine 164, cysteine 209, cysteine 212, and histidine 213. Glutamate 215, tyrosine 216, lysine 261, and glutamine 263 together coordinate Ca(2+). Tyrosine 216 provides a ligand contact to substrate. Histidine 264 serves as a coordination point for substrate. Heme c-binding residues include histidine 275, cysteine 282, cysteine 285, histidine 286, histidine 301, cysteine 314, cysteine 317, histidine 318, and histidine 393.

This sequence belongs to the cytochrome c-552 family. Ca(2+) is required as a cofactor. The cofactor is heme c.

It localises to the periplasm. It catalyses the reaction 6 Fe(III)-[cytochrome c] + NH4(+) + 2 H2O = 6 Fe(II)-[cytochrome c] + nitrite + 8 H(+). It participates in nitrogen metabolism; nitrate reduction (assimilation). Catalyzes the reduction of nitrite to ammonia, consuming six electrons in the process. The protein is Cytochrome c-552 of Shigella flexneri.